Consider the following 349-residue polypeptide: MNTAAIDQTDARPLDTTTAPMVDPFGRAVTYLRVSVTDRCDFRCTYCMAEHMAFLPKKDLLTLEELQRLCSAFIAKGVRKLRLTGGEPLVRKNIMFLIRELGKEIEAGRLDELTLTTNGSQLSKFAAELVDCGVRRINVSLDTLDPDKFRQITRWGELARVLEGIDAALAAGLKVKINAVALKDFNDAEIPELMRWAHGRGMDLTLIETMPMGEVDEDRTDHYLPLSEMRRRLEADFTLSDIPYRTGGPARYVEVAETGGRLGLITPLTHNFCESCNRVRLTCTGTLYMCLGQNDAADLRAALRATDDDAYLAQVIDEAIGRKPKGHDFIIDREHNRPAVARHMSVTGG.

One can recognise a Radical SAM core domain in the interval 24–250 (PFGRAVTYLR…DIPYRTGGPA (227 aa)). R33 serves as a coordination point for GTP. [4Fe-4S] cluster contacts are provided by C40 and C44. Residue Y46 coordinates S-adenosyl-L-methionine. C47 provides a ligand contact to [4Fe-4S] cluster. R82 serves as a coordination point for GTP. Residue G86 participates in S-adenosyl-L-methionine binding. T116 is a binding site for GTP. Residue S140 participates in S-adenosyl-L-methionine binding. K176 lines the GTP pocket. M210 lines the S-adenosyl-L-methionine pocket. Residues C273 and C276 each coordinate [4Fe-4S] cluster. Position 278–280 (278–280 (RVR)) interacts with GTP. C290 contacts [4Fe-4S] cluster.

Belongs to the radical SAM superfamily. MoaA family. As to quaternary structure, monomer and homodimer. [4Fe-4S] cluster serves as cofactor.

It catalyses the reaction GTP + AH2 + S-adenosyl-L-methionine = (8S)-3',8-cyclo-7,8-dihydroguanosine 5'-triphosphate + 5'-deoxyadenosine + L-methionine + A + H(+). It functions in the pathway cofactor biosynthesis; molybdopterin biosynthesis. Functionally, catalyzes the cyclization of GTP to (8S)-3',8-cyclo-7,8-dihydroguanosine 5'-triphosphate. The protein is GTP 3',8-cyclase of Rhizobium meliloti (strain 1021) (Ensifer meliloti).